Here is a 121-residue protein sequence, read N- to C-terminus: Nitrogenase-stabilizing/protective protein NifW (121 aa).

This sequence belongs to the NifW family. Homotrimer; associates with NifD.

Functionally, may protect the nitrogenase Fe-Mo protein from oxidative damage. The sequence is that of Nitrogenase-stabilizing/protective protein NifW from Synechococcus sp. (strain JA-2-3B'a(2-13)) (Cyanobacteria bacterium Yellowstone B-Prime).